Reading from the N-terminus, the 81-residue chain is Cell division protein ZapB (81 aa).

Residues 5-81 adopt a coiled-coil conformation; that stretch reads LEVFEKLESK…QALLGRMEEV (77 aa). Residues 43–64 are disordered; it reads VHSAQNGREELERENQQLREQQ. A compositionally biased stretch (basic and acidic residues) spans 49-59; the sequence is GREELERENQQ.

Belongs to the ZapB family. Homodimer. The ends of the coiled-coil dimer bind to each other, forming polymers. Interacts with FtsZ.

Its subcellular location is the cytoplasm. Non-essential, abundant cell division factor that is required for proper Z-ring formation. It is recruited early to the divisome by direct interaction with FtsZ, stimulating Z-ring assembly and thereby promoting cell division earlier in the cell cycle. Its recruitment to the Z-ring requires functional FtsA or ZipA. The sequence is that of Cell division protein ZapB from Enterobacter sp. (strain 638).